Reading from the N-terminus, the 689-residue chain is Glycine--tRNA ligase beta subunit (689 aa).

The protein belongs to the class-II aminoacyl-tRNA synthetase family. Tetramer of two alpha and two beta subunits.

It is found in the cytoplasm. It carries out the reaction tRNA(Gly) + glycine + ATP = glycyl-tRNA(Gly) + AMP + diphosphate. The protein is Glycine--tRNA ligase beta subunit of Dictyoglomus turgidum (strain DSM 6724 / Z-1310).